A 287-amino-acid polypeptide reads, in one-letter code: Bifunctional protein FolD (287 aa).

NADP(+)-binding positions include 166–168 (GAS) and I232.

It belongs to the tetrahydrofolate dehydrogenase/cyclohydrolase family. Homodimer.

The catalysed reaction is (6R)-5,10-methylene-5,6,7,8-tetrahydrofolate + NADP(+) = (6R)-5,10-methenyltetrahydrofolate + NADPH. It catalyses the reaction (6R)-5,10-methenyltetrahydrofolate + H2O = (6R)-10-formyltetrahydrofolate + H(+). It participates in one-carbon metabolism; tetrahydrofolate interconversion. Its function is as follows. Catalyzes the oxidation of 5,10-methylenetetrahydrofolate to 5,10-methenyltetrahydrofolate and then the hydrolysis of 5,10-methenyltetrahydrofolate to 10-formyltetrahydrofolate. The protein is Bifunctional protein FolD of Chromohalobacter salexigens (strain ATCC BAA-138 / DSM 3043 / CIP 106854 / NCIMB 13768 / 1H11).